A 319-amino-acid polypeptide reads, in one-letter code: Methionyl-tRNA formyltransferase (319 aa).

113–116 (SLLP) contacts (6S)-5,6,7,8-tetrahydrofolate.

This sequence belongs to the Fmt family.

It carries out the reaction L-methionyl-tRNA(fMet) + (6R)-10-formyltetrahydrofolate = N-formyl-L-methionyl-tRNA(fMet) + (6S)-5,6,7,8-tetrahydrofolate + H(+). In terms of biological role, attaches a formyl group to the free amino group of methionyl-tRNA(fMet). The formyl group appears to play a dual role in the initiator identity of N-formylmethionyl-tRNA by promoting its recognition by IF2 and preventing the misappropriation of this tRNA by the elongation apparatus. The sequence is that of Methionyl-tRNA formyltransferase from Pseudomonas fluorescens (strain Pf0-1).